The following is a 493-amino-acid chain: Trichothecene 8-O-acetyltransferase (493 aa).

A compositionally biased stretch (polar residues) spans 180 to 191; that stretch reads QDQNENEVQQPK. The disordered stretch occupies residues 180-199; the sequence is QDQNENEVQQPKNLPDPDEP.

It functions in the pathway sesquiterpene biosynthesis; trichothecene biosynthesis. Functionally, trichothecene 8-O-acetyltransferase; part of 2-gene cluster involved in trichothecene C-8 modification that mediates the biosynthesis of T2-toxin. The biosynthesis of trichothecenes begins with the cyclization of farnesyl diphosphate to trichodiene and is catalyzed by the trichodiene synthase TRI5. Trichodiene undergoes a series of oxygenations catalyzed by the cytochrome P450 monooxygenase TRI4. TRI4 controls the addition of four oxygens at C-2, C-3, C-11, and the C-12, C-13-epoxide to form the intermediate isotrichotriol. Isotrichotriol then undergoes a non-enzymatic isomerization and cyclization to form isotrichodermol. During this process, the oxygen at the C-2 position becomes the pyran ring oxygen and the hydroxyl group at C-11 is lost. More complex type A trichothecenes are built by modifying isotrichodermol through a series of paired hydroxylation and acetylation or acylation steps. Isotrichodermol is converted to isotrichodermin by the acetyltransferase TRI101. TRI101 encodes a C-3 transacetylase that acts as a self-protection or resistance factor during biosynthesis and that the presence of a free C-3 hydroxyl group is a key component of Fusarium trichothecene phytotoxicity. A second hydroxyl group is added to C-15 by the trichothecene C-15 hydroxylase TRI11, producing 15-decalonectrin, which is then acetylated by TRI3, producing calonectrin. A third hydroxyl group is added at C-4 by the cytochrome P450 monooxygenase TRI13, converting calonectrin to 3,15-diacetoxyspirpenol, which is subsequently acetylated bythe acetyltransferase TRI7. A fourth hydroxyl group is added to C-8 by the cytochrome P450 monooxygenase TRI1, followed by the addition of an isovaleryl moiety by TRI16. Finally, the acetyl group is removed from the C-3 position by the trichothecene C-3 esterase TRI8 to produce T-2 toxin. The sequence is that of Trichothecene 8-O-acetyltransferase from Fusarium sporotrichioides.